A 211-amino-acid chain; its full sequence is Large ribosomal subunit protein bL25 (211 aa).

It belongs to the bacterial ribosomal protein bL25 family. CTC subfamily. In terms of assembly, part of the 50S ribosomal subunit; part of the 5S rRNA/L5/L18/L25 subcomplex. Contacts the 5S rRNA. Binds to the 5S rRNA independently of L5 and L18.

Its function is as follows. This is one of the proteins that binds to the 5S RNA in the ribosome where it forms part of the central protuberance. This chain is Large ribosomal subunit protein bL25, found in Xanthomonas axonopodis pv. citri (strain 306).